The primary structure comprises 420 residues: Mitogen-activated protein kinase HOG2 (420 aa).

ATP-binding positions include 29–37 and Lys52; that span reads VGMGAFGLV. Catalysis depends on Asp144, which acts as the Proton acceptor. At Thr174 the chain carries Phosphothreonine. A TXY motif is present at residues 174-176; that stretch reads TGY. Position 176 is a phosphotyrosine (Tyr176). The segment at 372 to 394 is disordered; the sequence is AQHHHQTQQQSSGKHTNPTTSSS.

Belongs to the protein kinase superfamily. Ser/Thr protein kinase family. MAP kinase subfamily. HOG1 sub-subfamily. It depends on Mg(2+) as a cofactor. Dually phosphorylated on Thr-174 and Tyr-176, which activates the enzyme.

The protein localises to the cytoplasm. The protein resides in the nucleus. It catalyses the reaction L-seryl-[protein] + ATP = O-phospho-L-seryl-[protein] + ADP + H(+). It carries out the reaction L-threonyl-[protein] + ATP = O-phospho-L-threonyl-[protein] + ADP + H(+). Its activity is regulated as follows. Activated by tyrosine and threonine phosphorylation. In terms of biological role, mitogen-activated protein kinase involved in a signal transduction pathway that is activated by changes in the osmolarity of the extracellular environment. Controls osmotic regulation of transcription of target genes. The chain is Mitogen-activated protein kinase HOG2 (HOG2) from Zygosaccharomyces rouxii.